We begin with the raw amino-acid sequence, 565 residues long: Oxygen-dependent choline dehydrogenase (565 aa).

Position 6–35 (6–35 (DYIIVGAGSAGNTLATRLTEDAGVTVLLLE)) interacts with FAD. The active-site Proton acceptor is the His475.

The protein belongs to the GMC oxidoreductase family. It depends on FAD as a cofactor.

It catalyses the reaction choline + A = betaine aldehyde + AH2. The catalysed reaction is betaine aldehyde + NAD(+) + H2O = glycine betaine + NADH + 2 H(+). The protein operates within amine and polyamine biosynthesis; betaine biosynthesis via choline pathway; betaine aldehyde from choline (cytochrome c reductase route): step 1/1. Involved in the biosynthesis of the osmoprotectant glycine betaine. Catalyzes the oxidation of choline to betaine aldehyde and betaine aldehyde to glycine betaine at the same rate. The polypeptide is Oxygen-dependent choline dehydrogenase (Pseudomonas putida (strain ATCC 700007 / DSM 6899 / JCM 31910 / BCRC 17059 / LMG 24140 / F1)).